A 2293-amino-acid chain; its full sequence is G-protein coupled receptor 179 (2293 aa).

The first 27 residues, 1–27 (MGARAVVISSLAWGLLSCCFLCSGALG), serve as a signal peptide directing secretion. Residues 62 to 245 (FLYSGDVQRL…CHEGQLRPGW (184 aa)) form a cache-like region region. An N-linked (GlcNAc...) asparagine glycan is attached at asparagine 75. A disulfide bridge links cysteine 76 with cysteine 236. An N-linked (GlcNAc...) asparagine glycan is attached at asparagine 298. A run of 7 helical transmembrane segments spans residues 383–403 (AVLA…LVAY), 416–436 (IVLL…VFIL), 445–465 (CVAL…TIIL), 494–514 (LGQL…GALE), 544–564 (YIMV…CYAT), 585–602 (LLLS…VPSL), and 608–628 (LLLF…LIFI). Cysteine 445 and cysteine 537 are oxidised to a cystine. An N-linked (GlcNAc...) asparagine glycan is attached at asparagine 661. The tract at residues 733 to 812 (QHSRDSGSLG…GRESLADGPP (80 aa)) is disordered. Residues 738 to 759 (SGSLGLGSLPGSSRRRLLSSSL) show a composition bias toward low complexity. The span at 773-782 (STYDHHREHN) shows a compositional bias: basic and acidic residues. An N-linked (GlcNAc...) asparagine glycan is attached at asparagine 823. Disordered stretches follow at residues 872–935 (EERK…HPPI), 1046–1235 (GTGE…NPAL), 1275–1294 (ERTE…LSRS), 1326–1345 (EAVC…QLVH), 1388–1411 (GTST…ATFW), 1479–1560 (ELAG…HGGS), 1578–1770 (ATLS…VCPW), 1792–1828 (TVGK…TSKG), 1844–1882 (WKPP…KGEL), 1924–2051 (SSSH…GSEK), and 2212–2293 (FLPE…WDCE). Residues 1080 to 1089 (LKTPLQQGSV) show a composition bias toward polar residues. 3 stretches are compositionally biased toward basic and acidic residues: residues 1105–1123 (TYKE…KGKP), 1173–1186 (CQKE…DRNK), and 1275–1286 (ERTEGGSLEKKP). Basic and acidic residues-rich tracts occupy residues 1546-1555 (ASSKAGEKLL) and 1597-1632 (RTSE…RIQK). The span at 1644–1663 (PGSTPQRDTEKAQASLQRQG) shows a compositional bias: polar residues. 2 stretches are compositionally biased toward basic and acidic residues: residues 1682–1698 (GEER…RPND) and 1717–1728 (KKSERLGSEKEV). Positions 1737–1747 (PGDSSQQPDTP) are enriched in polar residues. Basic and acidic residues-rich tracts occupy residues 1748–1761 (NTEK…EHGS), 1796–1813 (GLER…RQNL), and 1872–1882 (ASDRASEKGEL). The segment covering 1937 to 1948 (RVSSQPLVSTGD) has biased composition (polar residues). The span at 1979–2007 (TETEMSRQDEKEKSQEEKERAPETRDHEG) shows a compositional bias: basic and acidic residues. The span at 2283–2293 (SPPPDYPWDCE) shows a compositional bias: pro residues.

Belongs to the G-protein coupled receptor 3 family. Homodimer. Associates with the R7 group RGS-GNB5 complexes, composed of an R7 group RGS subunit (RGS6, RGS7, RGS9 or RGS11) and GNB5, promoting their localization to the cell membrane and regulating the GTPase activator activity of R7 RGS proteins. Interacts with TRPM1. Interacts with GRM6. Interacts with EGFLAM; transsynaptic interaction is required for synaptic organization of photoreceptor cells.

The protein localises to the cell membrane. It is found in the postsynaptic cell membrane. The protein resides in the cell projection. It localises to the dendrite. Orphan receptor involved in vision. Required for signal transduction through retinal depolarizing bipolar cells. Acts as an atypical G-protein coupled receptor that recruits and regulates the R7 group RGS-GNB5 complexes instead of activating G proteins: promotes the GTPase activator activity of R7 RGS proteins, increasing the GTPase activity of G protein alpha subunits, thereby driving them into their inactive GDP-bound form. Associates with components of metabotropic signaling cascade in retina ON-bipolar neurons, such as TRPM1 and GRM6: may control the ability of the GRM6 cascade to gate TRPM1. In Mus musculus (Mouse), this protein is G-protein coupled receptor 179.